Reading from the N-terminus, the 719-residue chain is Ribosomal RNA large subunit methyltransferase K/L (719 aa).

One can recognise a THUMP domain in the interval 43–154 (TQYRVLLWTR…REELVISLDL (112 aa)).

It belongs to the methyltransferase superfamily. RlmKL family.

It localises to the cytoplasm. The catalysed reaction is guanosine(2445) in 23S rRNA + S-adenosyl-L-methionine = N(2)-methylguanosine(2445) in 23S rRNA + S-adenosyl-L-homocysteine + H(+). It carries out the reaction guanosine(2069) in 23S rRNA + S-adenosyl-L-methionine = N(2)-methylguanosine(2069) in 23S rRNA + S-adenosyl-L-homocysteine + H(+). Functionally, specifically methylates the guanine in position 2445 (m2G2445) and the guanine in position 2069 (m7G2069) of 23S rRNA. This Pasteurella multocida (strain Pm70) protein is Ribosomal RNA large subunit methyltransferase K/L.